Reading from the N-terminus, the 313-residue chain is Catalase-related peroxidase (313 aa).

H28 is a catalytic residue. Heme is bound at residue Y294.

It belongs to the catalase family. In terms of assembly, monomer. The cofactor is heme.

In terms of biological role, has an organic peroxide-dependent peroxidase activity. Exhibits strong peroxidase activity using organic hydroperoxides as cosubstrates, weak peroxidase activity using hydrogen peroxide and negligible catalase activity. May have a role in elimination of reactive oxygen species, in particular by deactivating hydroperoxides. The sequence is that of Catalase-related peroxidase from Mycolicibacterium paratuberculosis (strain ATCC BAA-968 / K-10) (Mycobacterium paratuberculosis).